A 610-amino-acid chain; its full sequence is Calcium-dependent protein kinase 1 (610 aa).

A lipid anchor (N-myristoyl glycine) is attached at G2. The S-palmitoyl cysteine moiety is linked to residue C5. The interval V17–L133 is disordered. Composition is skewed to basic and acidic residues over residues L47–Q56 and T70–A117. Residues K118–R127 show a composition bias toward basic residues. Residues Y150–V408 enclose the Protein kinase domain. ATP-binding positions include L156–T164 and K179. The active-site Proton acceptor is the D274. Residue S314 is modified to Phosphoserine. The segment at A414 to I444 is autoinhibitory domain. EF-hand domains are found at residues E451–N486, L487–I522, E523–E558, and D559–T592. Residues D464, D466, S468, Q470, E475, D500, D502, S504, T506, E511, D536, D538, S540, Y542, E547, D570, D572, D574, R576, and E581 each coordinate Ca(2+).

The protein belongs to the protein kinase superfamily. Ser/Thr protein kinase family. CDPK subfamily. Interacts with 14-3-3 proteins.

The protein resides in the peroxisome membrane. It catalyses the reaction L-seryl-[protein] + ATP = O-phospho-L-seryl-[protein] + ADP + H(+). The enzyme catalyses L-threonyl-[protein] + ATP = O-phospho-L-threonyl-[protein] + ADP + H(+). Its activity is regulated as follows. Activated by calcium. Autophosphorylation may play an important role in the regulation of the kinase activity. May play a role in signal transduction pathways that involve calcium as a second messenger. Phosphorylates the Ca(2+)-ATPase ACA2 resulting in the inhibition of its calcium activation. The protein is Calcium-dependent protein kinase 1 (CPK1) of Arabidopsis thaliana (Mouse-ear cress).